The primary structure comprises 150 residues: Catabolic 3-dehydroquinase 2 (150 aa).

The active-site Proton acceptor is Y23. Substrate-binding residues include N74, H80, and D87. H100 (proton donor) is an active-site residue. Substrate-binding positions include 101-102 (IT) and R111.

This sequence belongs to the type-II 3-dehydroquinase family. In terms of assembly, homododecamer. Adopts a ring-like structure, composed of an arrangement of two hexameric rings stacked on top of one another.

The catalysed reaction is 3-dehydroquinate = 3-dehydroshikimate + H2O. It functions in the pathway aromatic compound metabolism; 3,4-dihydroxybenzoate biosynthesis; 3,4-dihydroxybenzoate from 3-dehydroquinate: step 1/2. Is involved in the catabolism of quinate. Allows the utilization of quinate as carbon source via the beta-ketoadipate pathway. In Neosartorya fischeri (strain ATCC 1020 / DSM 3700 / CBS 544.65 / FGSC A1164 / JCM 1740 / NRRL 181 / WB 181) (Aspergillus fischerianus), this protein is Catabolic 3-dehydroquinase 2.